The sequence spans 361 residues: Cyclic AMP receptor-like protein C (361 aa).

Residues 1-18 are Extracellular-facing; the sequence is MGIEESQICNPSDREFLS. Residues 19-39 form a helical membrane-spanning segment; that stretch reads VDILNIVTSSLSLMGSALTII. Residues 40-113 lie on the Cytoplasmic side of the membrane; sequence SYIWKKVRRH…HGTYKQPTSK (74 aa). A helical membrane pass occupies residues 114–134; it reads LPLLIFMLSIADFFTSFFIII. At 135 to 166 the chain is on the extracellular side; sequence SQSYLINNSKSYSTPYSPDLKIHFSPCIILRA. A helical membrane pass occupies residues 167 to 187; the sequence is IIQFFFLSTFFWTTCISYYLF. The Cytoplasmic portion of the chain corresponds to 188 to 197; sequence HQLSSPGEEK. Residues 198 to 218 traverse the membrane as a helical segment; that stretch reads YLLAIFNVVSWGIPFAISMVI. The Extracellular segment spans residues 219–238; it reads TMTNSIVVNSDGWCEVAKPM. The helical transmembrane segment at 239 to 259 threads the bilayer; that stretch reads ELSLWFLPLFLCLLVCSIYYF. The Cytoplasmic portion of the chain corresponds to 260–292; sequence RLRRLFRSKFEYRLQINDRLKQLDSTISRRLTL. Residues 293–313 traverse the membrane as a helical segment; sequence YIVVFVICWLPDVIQHFISFF. At 314-318 the chain is on the extracellular side; it reads SKCTF. The chain crosses the membrane as a helical span at residues 319 to 339; sequence FPLLILQNILTPSQGFWNFWI. Residues 340-361 are Cytoplasmic-facing; that stretch reads YSYTNKIARFTPSNDENKRLLQ.

This sequence belongs to the G-protein coupled receptor 5 family.

The protein localises to the membrane. Receptor for cAMP. The sequence is that of Cyclic AMP receptor-like protein C (crlC) from Dictyostelium discoideum (Social amoeba).